The sequence spans 640 residues: MAPKPPSGTSLRAWDAVTPALSEWVLEAMSSMGFTRMTPVQASAIPLFMAHKDVVVEAVTGSGKTLSFLIPVVEKLLRLEEPIKKHHVGAIIISPTRELASQIYNVLSSLLAFHPPSAAAINPSEDDDAPRPKFPSSTLKVVPQLLLGGSTTPAEDLSTFLKRSPNVLVSTPGRLLELLSSPHVHCPQSSFEMLVLDEADRLLDLGFKETLQNILRRLPKQRRTGLFSASVSEAVDQIVRVGLRNPVKVMVKVKGGSGVDDKRTPASLQMTYLTTPPSHKFAALKRIVSSVQPTPLKTIFFVSTCSGVDYLSAILPLLLGDDFLLIPLHGKHQANVRQKNFNRFINSHDPAILLTTDVAARGLDIPSVDLVVQIDPPSDPKSFIHRCGRAGRAGRRGLSVVLLHPGREEDYVSFLEVRKTPVVPFSPSISFSDADAAAATATARKAVLADRALHDRGQKAFVSWLRSYSKHQASSIFRVSDLDWEALGKAWGLLKLPKMPELKNFTGDKTLGMSLDWDNYAYKDKQREKRRKELLQEAAESGATQSTSNKRRATESVAWSQQAESKNKKLKRREQKKSKQEKARWEKMTEEEKQKVLETEKMVEELRKKNEEERRLRRAVAKAAGAKADGDDEEEFQGFD.

A Q motif motif is present at residues 14 to 42 (WDAVTPALSEWVLEAMSSMGFTRMTPVQA). The Helicase ATP-binding domain maps to 45–249 (IPLFMAHKDV…RVGLRNPVKV (205 aa)). 58 to 65 (AVTGSGKT) is an ATP binding site. A DEAD box motif is present at residues 197–200 (DEAD). The Helicase C-terminal domain occupies 283 to 437 (ALKRIVSSVQ…SISFSDADAA (155 aa)). Positions 521–629 (AYKDKQREKR…VAKAAGAKAD (109 aa)) form a coiled coil. Disordered regions lie at residues 531-593 (RKEL…EEEK) and 607-640 (RKKN…QGFD). Over residues 577-593 (KSKQEKARWEKMTEEEK) the composition is skewed to basic and acidic residues. Over residues 630–640 (GDDEEEFQGFD) the composition is skewed to acidic residues.

The protein belongs to the DEAD box helicase family. DDX55/SPB4 subfamily. In terms of assembly, component of pre-60S ribosomal complexes.

Its subcellular location is the nucleus. The protein localises to the nucleolus. It catalyses the reaction ATP + H2O = ADP + phosphate + H(+). Functionally, ATP-binding RNA helicase involved in the biogenesis of 60S ribosomal subunits. Binds 90S pre-ribosomal particles and dissociates from pre-60S ribosomal particles after processing of 27SB pre-rRNA. Required for the normal formation of 18S rRNA through the processing of pre-rRNAs at sites A0, A1 and A2, and the normal formation of 25S and 5.8S rRNAs through the processing of pre-rRNAs at sites C1 and C2. In Aspergillus fumigatus (strain ATCC MYA-4609 / CBS 101355 / FGSC A1100 / Af293) (Neosartorya fumigata), this protein is ATP-dependent rRNA helicase spb4.